The sequence spans 636 residues: Ketocytochalasin monooxygenase (636 aa).

Residues Asp125, 133–136, Asp145, Tyr151, and Ile195 contribute to the FAD site; that span reads TWYW. Residue 143-145 participates in NADP(+) binding; sequence ACD. NADP(+) is bound by residues 279 to 285, 302 to 303, and 420 to 421; these read TGASAVQ, RT, and KR. Trp534 contributes to the FAD binding site.

It belongs to the FAD-binding monooxygenase family. FAD serves as cofactor.

It catalyses the reaction ketocytochalasin + NADPH + O2 + H(+) = iso-precytochalasin + NADP(+) + H2O. The enzyme catalyses iso-precytochalasin + NADPH + O2 + H(+) = cytochalasin Z16 + NADP(+) + H2O. It functions in the pathway mycotoxin biosynthesis. Ketocytochalasin monooxygenase; part of the gene cluster that mediates the biosynthesis of a family of the mycotoxins cytochalasins E and K. The hybrid PKS-NRPS synthetase ccsA and the enoyl reductase ccsC are responsible for fusion of phenylalanine with an octaketide backbone and subsequent release of the stable tetramic acid precursor. The polyketide synthase module (PKS) of the PKS-NRPS ccsA is responsible for the synthesis of the octaketide backbone. The downstream nonribosomal peptide synthetase (NRPS) amidates the carboxyl end of the octaketide with a phenylalanine. A reductase-like domain (R) at the C-terminus catalyzes the reductive release of the polyketide-amino acid intermediate. Because ccsA lacks a designated enoylreductase (ER) domain, the required activity is provided the enoyl reductase ccsC. Upon formation of the 11-membered carbocycle-fused perhydroisoindolone intermediate, a number of oxidative steps are required to afford the final cytochalasin E and K, including two hydroxylations at C17 and C18, one alcohol oxidation at C17, one epoxidation at C6 and C7 and two Baeyer-Villiger oxidations. The oxidative modification at C17, C18 and the C6-C7 epoxidation are likely to be catalyzed by the two cytochrome P450 oxygenases ccsD and ccsG. CcsD may be responsible for the epoxidation of the C6-C7 double bond. CcsG may be responsible for the successive oxidative modifications at C17 and C18. The double Baeyer-Villiger oxidations of ketocytochalasin to precytochalasin and cytochalasin Z(16) are among the final steps leading to cytochalasin E and K and are catalyzed by ccsB. The first oxygen insertion step follows that of the classic BVMO mechanism, generating the ester precytochalasin. Release of precytochalasin into an aqueous environment can generate the shunt product iso-precytochalasin through spontaneous isomerization. Alternatively, precytochalasin can undergo further oxidation by ccsB to yield the in-line carbonate-containing cytochalasin Z(16). Cytochalasin Z(16) is a precursor to cytochalasin E and cytochalasin K, whereas iso-precytochalasin is a precursor to cytochalasin Z(17) and rosellichalasin. The hydrolyase ccsE may catalyze hydrolysis of epoxide bond in cytochalasin E to afford cytochalasin K. The function of ccsF has not been assigned but it may play a role in post-PKS-NRPS biosynthetic step, resistance or transport of cytochalasins and related PKS-NRPS products. The polypeptide is Ketocytochalasin monooxygenase (Aspergillus clavatus (strain ATCC 1007 / CBS 513.65 / DSM 816 / NCTC 3887 / NRRL 1 / QM 1276 / 107)).